The primary structure comprises 633 residues: Mini-chromosome maintenance complex-binding protein (633 aa).

Residues 154–198 (PSTSYTPSRHKRSYEEDEDMEQHPSKQKEQHMGSGGDSHGCGEPK) form a disordered region. A compositionally biased stretch (basic and acidic residues) spans 174 to 184 (EQHPSKQKEQH).

It belongs to the MCMBP family. Interacts with the MCM complex: associates with the MCM3-7 complex which lacks MCM2, while it does not interact with the MCM complex when MCM2 is present (MCM2-7 complex).

The protein resides in the nucleus. In terms of biological role, associated component of the MCM complex that acts as a regulator of DNA replication. Binds to the MCM complex during late S phase and promotes the disassembly of the MCM complex from chromatin, thereby acting as a key regulator of pre-replication complex (pre-RC) unloading from replicated DNA. Can dissociate the MCM complex without addition of ATP; probably acts by destabilizing interactions of each individual subunits of the MCM complex. Required for sister chromatid cohesion. The polypeptide is Mini-chromosome maintenance complex-binding protein (MCMBP) (Gallus gallus (Chicken)).